Reading from the N-terminus, the 234-residue chain is Urease accessory protein UreG 1 (234 aa).

The disordered stretch occupies residues 1–29 (MTRTPTGVPMHLGHTHDAPAAVSADATRP). 42-49 (GPVGSGKT) provides a ligand contact to GTP.

The protein belongs to the SIMIBI class G3E GTPase family. UreG subfamily. Homodimer. UreD, UreF and UreG form a complex that acts as a GTP-hydrolysis-dependent molecular chaperone, activating the urease apoprotein by helping to assemble the nickel containing metallocenter of UreC. The UreE protein probably delivers the nickel.

The protein localises to the cytoplasm. Facilitates the functional incorporation of the urease nickel metallocenter. This process requires GTP hydrolysis, probably effectuated by UreG. The chain is Urease accessory protein UreG 1 from Streptomyces griseus subsp. griseus (strain JCM 4626 / CBS 651.72 / NBRC 13350 / KCC S-0626 / ISP 5235).